The primary structure comprises 125 residues: Protein U2 (125 aa).

Belongs to the nanovirus U2 protein family.

In Milk vetch dwarf virus (isolate N) (MDV), this protein is Protein U2 (DNA-U2).